The following is a 310-amino-acid chain: Ribose-phosphate pyrophosphokinase (310 aa).

Residues 33–35 (DGE) and 92–93 (RQ) each bind ATP. 2 residues coordinate Mg(2+): histidine 127 and aspartate 166. The active site involves lysine 189. D-ribose 5-phosphate-binding positions include arginine 191, aspartate 215, and 219-223 (DTAGT).

It belongs to the ribose-phosphate pyrophosphokinase family. Class I subfamily. As to quaternary structure, homohexamer. Mg(2+) is required as a cofactor.

It localises to the cytoplasm. The enzyme catalyses D-ribose 5-phosphate + ATP = 5-phospho-alpha-D-ribose 1-diphosphate + AMP + H(+). It participates in metabolic intermediate biosynthesis; 5-phospho-alpha-D-ribose 1-diphosphate biosynthesis; 5-phospho-alpha-D-ribose 1-diphosphate from D-ribose 5-phosphate (route I): step 1/1. Its function is as follows. Involved in the biosynthesis of the central metabolite phospho-alpha-D-ribosyl-1-pyrophosphate (PRPP) via the transfer of pyrophosphoryl group from ATP to 1-hydroxyl of ribose-5-phosphate (Rib-5-P). The polypeptide is Ribose-phosphate pyrophosphokinase (Bordetella parapertussis (strain 12822 / ATCC BAA-587 / NCTC 13253)).